A 302-amino-acid polypeptide reads, in one-letter code: Aspartate carbamoyltransferase catalytic subunit (302 aa).

Carbamoyl phosphate-binding residues include arginine 55 and threonine 56. Lysine 83 provides a ligand contact to L-aspartate. Residues arginine 105, histidine 133, and glutamine 136 each coordinate carbamoyl phosphate. L-aspartate contacts are provided by arginine 166 and arginine 222. Carbamoyl phosphate-binding residues include glycine 262 and proline 263.

It belongs to the aspartate/ornithine carbamoyltransferase superfamily. ATCase family. Heterododecamer (2C3:3R2) of six catalytic PyrB chains organized as two trimers (C3), and six regulatory PyrI chains organized as three dimers (R2).

It catalyses the reaction carbamoyl phosphate + L-aspartate = N-carbamoyl-L-aspartate + phosphate + H(+). Its pathway is pyrimidine metabolism; UMP biosynthesis via de novo pathway; (S)-dihydroorotate from bicarbonate: step 2/3. In terms of biological role, catalyzes the condensation of carbamoyl phosphate and aspartate to form carbamoyl aspartate and inorganic phosphate, the committed step in the de novo pyrimidine nucleotide biosynthesis pathway. This Solibacter usitatus (strain Ellin6076) protein is Aspartate carbamoyltransferase catalytic subunit.